Consider the following 217-residue polypeptide: Adenylate kinase (217 aa).

An ATP-binding site is contributed by 10 to 15 (GAGKGT). An NMP region spans residues 30-59 (STGDMLRAAVKAGTPLGIEAKKVMDAGGLV). AMP is bound by residues threonine 31, arginine 36, 57 to 59 (GLV), 85 to 88 (GFPR), and glutamine 92. Positions 122 to 159 (GRRAHLASGRTYHVKYNPPKVEGKDDVTGEDLVQRDDD) are LID. Residues arginine 123 and 132–133 (TY) contribute to the ATP site. Residues arginine 156 and arginine 167 each coordinate AMP. Position 203 (glycine 203) interacts with ATP.

It belongs to the adenylate kinase family. Monomer.

The protein localises to the cytoplasm. The catalysed reaction is AMP + ATP = 2 ADP. It participates in purine metabolism; AMP biosynthesis via salvage pathway; AMP from ADP: step 1/1. Functionally, catalyzes the reversible transfer of the terminal phosphate group between ATP and AMP. Plays an important role in cellular energy homeostasis and in adenine nucleotide metabolism. The protein is Adenylate kinase of Azoarcus sp. (strain BH72).